Reading from the N-terminus, the 69-residue chain is MKTQFVILMITVILMQMLVQTEGGILGKLWEGFKSIVGKRGLNDRDQLDDLFDSDLSDADIKLLKEMFK.

A signal peptide spans 1 to 23; sequence MKTQFVILMITVILMQMLVQTEG. Val-37 is modified (valine amide). The propeptide occupies 41–69; the sequence is GLNDRDQLDDLFDSDLSDADIKLLKEMFK.

Belongs to the non-disulfide-bridged peptide (NDBP) superfamily. Short antimicrobial peptide (group 4) family. Expressed by the venom gland.

The protein localises to the secreted. It localises to the target cell membrane. Its function is as follows. Amphipathic peptide that possesses relatively strong activities against Gram-positive bacteria and a fungus, but has very weak antimicrobial activities against Gram-negative bacteria. Also exhibits very low hemolytic activities against human erythrocytes (64 uM induce 21% of hemolysis). Minimal inhibitory concentration (MIC) are the following: 8 uM against S.aureus, 32 uM against B.magaterium, 32 uM against M.luteus, 28 uM against vancomycin-resistant Enterococci, 14 uM against methicillin-resistant S.aureus, 62 uM against E.coli, &gt;87 uM against P.putida, &gt;87 uM against K.oxytoca, 76 uM against E.cloacae, 72 uM against S.enterica and 16 uM against the fungus C.tropicalis. This chain is Pantinin-1, found in Pandinus imperator (Emperor scorpion).